Here is a 152-residue protein sequence, read N- to C-terminus: Probable ribose-5-phosphate isomerase B (152 aa).

12-13 (DH) provides a ligand contact to D-ribulose 5-phosphate. Cysteine 70 (proton acceptor) is an active-site residue. 71–75 (GTGVG) is a D-ribulose 5-phosphate binding site. Histidine 103 serves as the catalytic Proton donor. The D-ribulose 5-phosphate site is built by aspartate 104, arginine 114, arginine 137, and arginine 141.

The protein belongs to the LacAB/RpiB family. In terms of assembly, homodimer.

It carries out the reaction aldehydo-D-ribose 5-phosphate = D-ribulose 5-phosphate. The protein operates within carbohydrate degradation; pentose phosphate pathway; D-ribose 5-phosphate from D-ribulose 5-phosphate (non-oxidative stage): step 1/1. Its function is as follows. Catalyzes the interconversion of ribulose-5-P and ribose-5-P. This is Probable ribose-5-phosphate isomerase B from Mycoplasma pneumoniae (strain ATCC 29342 / M129 / Subtype 1) (Mycoplasmoides pneumoniae).